The primary structure comprises 317 residues: Glutaminase (317 aa).

Residues serine 67, asparagine 118, glutamate 162, asparagine 169, tyrosine 193, tyrosine 245, and valine 263 each coordinate substrate.

This sequence belongs to the glutaminase family. In terms of assembly, homotetramer.

The enzyme catalyses L-glutamine + H2O = L-glutamate + NH4(+). This chain is Glutaminase, found in Brucella abortus (strain S19).